The chain runs to 512 residues: Probable amidase At4g34880 (512 aa).

Catalysis depends on charge relay system residues Lys-117 and Ser-198. The active-site Acyl-ester intermediate is the Ser-222.

Belongs to the amidase family. In terms of tissue distribution, expressed in vasculature of roots, cotyledons, leaves and sepals.

It catalyses the reaction a monocarboxylic acid amide + H2O = a monocarboxylate + NH4(+). In Arabidopsis thaliana (Mouse-ear cress), this protein is Probable amidase At4g34880.